We begin with the raw amino-acid sequence, 436 residues long: Cholecystokinin receptor type A (436 aa).

The Extracellular segment spans residues 1 to 41 (MDVVDSLLMNGSNITPPCELGLENETLFCLDQPQPSKEWQS). N-linked (GlcNAc...) asparagine glycans are attached at residues N10 and N24. A disulfide bridge links C18 with C29. A helical membrane pass occupies residues 42 to 67 (AVQILLYSFIFLLSVLGNTLVITVLI). Topologically, residues 68–77 (RNKRMRTVTN) are cytoplasmic. Residues 78–104 (IFLLSLAVSDLMLCLFCMPFNLIPNLL) form a helical membrane-spanning segment. Residues 105 to 115 (KDFIFGSAVCK) lie on the Extracellular side of the membrane. C114 and C196 form a disulfide bridge. A helical transmembrane segment spans residues 116 to 137 (TTTYFMGTSVSVSTFNLVAISL). At 138–157 (ERYGAICRPLQSRVWQTKSH) the chain is on the cytoplasmic side. Residues 158–178 (ALKVIAATWCLSFTIMTPYPI) traverse the membrane as a helical segment. The Extracellular portion of the chain corresponds to 179 to 210 (YSNLVPFTKNNNQTANMCRFLLPSDAMQQSWQ). Residue N190 is glycosylated (N-linked (GlcNAc...) asparagine). The chain crosses the membrane as a helical span at residues 211–234 (TFLLLILFLIPGVVMVVAYGLISL). Over 235–321 (ELYQGIKFDA…NLIAKKRVIR (87 aa)) the chain is Cytoplasmic. The disordered stretch occupies residues 252–280 (EKRLSSGGGGGGGSSSSRYEDSDGCYLQK). A helical membrane pass occupies residues 322 to 342 (MLIVIVVLFFLCWMPIFSANA). Over 343–357 (WRAYDTVSAEKHLSG) the chain is Extracellular. Residues 358–381 (TPISFILLLSYTSSCVNPIIYCFM) form a helical membrane-spanning segment. Over 382–436 (NKRFRLGFMATFPCCPNPGPTGVRGEVGEEEDGRTIRASLSRYSYSHMSTSAPPH) the chain is Cytoplasmic. A lipid anchor (S-palmitoyl cysteine) is attached at C395.

The protein belongs to the G-protein coupled receptor 1 family.

It localises to the cell membrane. Receptor for cholecystokinin. Mediates pancreatic growth and enzyme secretion, smooth muscle contraction of the gall bladder and stomach. Has a 1000-fold higher affinity for CCK rather than for gastrin. It modulates feeding and dopamine-induced behavior in the central and peripheral nervous system. This receptor mediates its action by association with G proteins that activate a phosphatidylinositol-calcium second messenger system. The sequence is that of Cholecystokinin receptor type A (Cckar) from Mus musculus (Mouse).